We begin with the raw amino-acid sequence, 136 residues long: Glutamate-rich protein 4 (136 aa).

Residues 92–136 form a disordered region; that stretch reads EEEEEEEQEEKSCVEENKGPEEKQDEERSRSSYPAQRLPDFGMTI. Residues 101 to 121 show a composition bias toward basic and acidic residues; sequence EKSCVEENKGPEEKQDEERSR.

The protein is Glutamate-rich protein 4 (Erich4) of Mus musculus (Mouse).